A 123-amino-acid chain; its full sequence is Large ribosomal subunit protein bL12 (123 aa).

It belongs to the bacterial ribosomal protein bL12 family. Homodimer. Part of the ribosomal stalk of the 50S ribosomal subunit. Forms a multimeric L10(L12)X complex, where L10 forms an elongated spine to which 2 to 4 L12 dimers bind in a sequential fashion. Binds GTP-bound translation factors.

Its function is as follows. Forms part of the ribosomal stalk which helps the ribosome interact with GTP-bound translation factors. Is thus essential for accurate translation. The protein is Large ribosomal subunit protein bL12 of Albidiferax ferrireducens (strain ATCC BAA-621 / DSM 15236 / T118) (Rhodoferax ferrireducens).